The primary structure comprises 221 residues: Adenylate kinase (221 aa).

10–15 is an ATP binding site; it reads GAGKGT. Positions 30 to 59 are NMP; sequence STGDMLRAAVKAGTPLGLEAKRFMDAGELV. AMP is bound by residues Thr31, Arg36, 57–59, 85–88, and Gln92; these read ELV and GFPR. The tract at residues 122-159 is LID; the sequence is GRRSHAASGRTYHVKFNPPKVEGLDDVTGEPLIQRDDD. ATP contacts are provided by residues Arg123 and 132–133; that span reads TY. 2 residues coordinate AMP: Arg156 and Arg167. An ATP-binding site is contributed by Gly207.

This sequence belongs to the adenylate kinase family. Monomer.

It is found in the cytoplasm. The catalysed reaction is AMP + ATP = 2 ADP. The protein operates within purine metabolism; AMP biosynthesis via salvage pathway; AMP from ADP: step 1/1. Its function is as follows. Catalyzes the reversible transfer of the terminal phosphate group between ATP and AMP. Plays an important role in cellular energy homeostasis and in adenine nucleotide metabolism. This chain is Adenylate kinase, found in Paraburkholderia xenovorans (strain LB400).